A 341-amino-acid polypeptide reads, in one-letter code: Heat-inducible transcription repressor HrcA (341 aa).

This sequence belongs to the HrcA family.

Its function is as follows. Negative regulator of class I heat shock genes (grpE-dnaK-dnaJ and groELS operons). Prevents heat-shock induction of these operons. This is Heat-inducible transcription repressor HrcA from Corynebacterium glutamicum (strain ATCC 13032 / DSM 20300 / JCM 1318 / BCRC 11384 / CCUG 27702 / LMG 3730 / NBRC 12168 / NCIMB 10025 / NRRL B-2784 / 534).